The following is a 602-amino-acid chain: Elongation factor 4 (602 aa).

A tr-type G domain is found at N2–K184. GTP-binding positions include D14–T19 and N131–D134.

The protein belongs to the TRAFAC class translation factor GTPase superfamily. Classic translation factor GTPase family. LepA subfamily.

It is found in the cell inner membrane. The catalysed reaction is GTP + H2O = GDP + phosphate + H(+). Required for accurate and efficient protein synthesis under certain stress conditions. May act as a fidelity factor of the translation reaction, by catalyzing a one-codon backward translocation of tRNAs on improperly translocated ribosomes. Back-translocation proceeds from a post-translocation (POST) complex to a pre-translocation (PRE) complex, thus giving elongation factor G a second chance to translocate the tRNAs correctly. Binds to ribosomes in a GTP-dependent manner. This chain is Elongation factor 4, found in Delftia acidovorans (strain DSM 14801 / SPH-1).